Here is an 828-residue protein sequence, read N- to C-terminus: Mediator of RNA polymerase II transcription subunit 16 (828 aa).

WD repeat units lie at residues 68-107 (GHQE…ANSW), 199-241 (RCRV…VSEK), 264-308 (DKFP…LPLN), 622-663 (NQGS…CLPV), and 777-816 (FPTE…TCLC).

This sequence belongs to the Mediator complex subunit 16 family. Component of the Mediator complex.

The protein resides in the nucleus. Its function is as follows. Component of the Mediator complex, a coactivator involved in the regulated transcription of nearly all RNA polymerase II-dependent genes. Mediator functions as a bridge to convey information from gene-specific regulatory proteins to the basal RNA polymerase II transcription machinery. Mediator is recruited to promoters by direct interactions with regulatory proteins and serves as a scaffold for the assembly of a functional preinitiation complex with RNA polymerase II and the general transcription factors. The polypeptide is Mediator of RNA polymerase II transcription subunit 16 (med16) (Xenopus tropicalis (Western clawed frog)).